The chain runs to 139 residues: uncharacterized protein (139 aa).

The HTH cro/C1-type domain maps to 8-63 (LRELRRARKLTVNQLAVYSGISSATISKIENGKRGTPKPATIKKLAAVLKVPYENL). The segment at residues 19–38 (VNQLAVYSGISSATISKIEN) is a DNA-binding region (H-T-H motif).

This is an uncharacterized protein from Bacillus subtilis (strain 168).